Here is a 454-residue protein sequence, read N- to C-terminus: Keratin, type I cuticular Ha5 (454 aa).

Positions 1–97 are head; the sequence is MASKCLKASF…FGEGILTGNE (97 aa). The IF rod domain maps to 97–407; that stretch reads EKETMQFLND…GLLDSEDCKL (311 aa). The segment at 98–125 is coil 1A; sequence KETMQFLNDRLASYLEKCGSWSGRTRSW. The linker 1 stretch occupies residues 134 to 142; the sequence is SNSALPVPD. Positions 143 to 243 are coil 1B; the sequence is YQSYFQTIEE…HEEEVNSLRC (101 aa). The interval 244–259 is linker 12; the sequence is QLGDRLNVEVDAAPPV. A coil 2 region spans residues 260 to 403; the sequence is DLNRVLNEMR…NTYRGLLDSE (144 aa). Residues 404 to 454 are tail; that stretch reads DCKLPCNPCAPDHSPSKSCLPCLPAASCGPGMARTTCSPRPICVPCPGSRF.

Belongs to the intermediate filament family.

This chain is Keratin, type I cuticular Ha5, found in Bos taurus (Bovine).